We begin with the raw amino-acid sequence, 520 residues long: Anthranilate synthase component 1 (520 aa).

L-tryptophan contacts are provided by residues Ser40 and 291-293 (PYM). A chorismate-binding site is contributed by 328–329 (GT). Glu361 is a Mg(2+) binding site. Chorismate-binding positions include Tyr449, Arg469, 483–485 (GAG), and Gly485. Glu498 provides a ligand contact to Mg(2+).

It belongs to the anthranilate synthase component I family. In terms of assembly, heterotetramer consisting of two non-identical subunits: a beta subunit (TrpG) and a large lpha subunit (TrpE). The cofactor is Mg(2+).

The enzyme catalyses chorismate + L-glutamine = anthranilate + pyruvate + L-glutamate + H(+). It functions in the pathway amino-acid biosynthesis; L-tryptophan biosynthesis; L-tryptophan from chorismate: step 1/5. With respect to regulation, cooperatively feedback inhibited by tryptophan. In terms of biological role, part of a heterotetrameric complex that catalyzes the two-step biosynthesis of anthranilate, an intermediate in the biosynthesis of L-tryptophan. In the first step, the glutamine-binding beta subunit (TrpG) of anthranilate synthase (AS) provides the glutamine amidotransferase activity which generates ammonia as a substrate that, along with chorismate, is used in the second step, catalyzed by the large alpha subunit of AS (TrpE) to produce anthranilate. In the absence of TrpG, TrpE can synthesize anthranilate directly from chorismate and high concentrations of ammonia. In Escherichia coli (strain K12), this protein is Anthranilate synthase component 1 (trpE).